Reading from the N-terminus, the 122-residue chain is Large ribosomal subunit protein uL14 (122 aa).

The protein belongs to the universal ribosomal protein uL14 family. In terms of assembly, part of the 50S ribosomal subunit. Forms a cluster with proteins L3 and L19. In the 70S ribosome, L14 and L19 interact and together make contacts with the 16S rRNA in bridges B5 and B8.

In terms of biological role, binds to 23S rRNA. Forms part of two intersubunit bridges in the 70S ribosome. This is Large ribosomal subunit protein uL14 from Pseudomonas fluorescens (strain ATCC BAA-477 / NRRL B-23932 / Pf-5).